Consider the following 316-residue polypeptide: tRNA-dihydrouridine(16) synthase (316 aa).

FMN-binding positions include 7-9 (PME) and glutamine 68. Residue cysteine 98 is the Proton donor of the active site. Residues lysine 139, 200–202 (NGE), and 224–225 (GR) contribute to the FMN site.

The protein belongs to the Dus family. DusC subfamily. Requires FMN as cofactor.

The enzyme catalyses 5,6-dihydrouridine(16) in tRNA + NADP(+) = uridine(16) in tRNA + NADPH + H(+). It catalyses the reaction 5,6-dihydrouridine(16) in tRNA + NAD(+) = uridine(16) in tRNA + NADH + H(+). In terms of biological role, catalyzes the synthesis of 5,6-dihydrouridine (D), a modified base found in the D-loop of most tRNAs, via the reduction of the C5-C6 double bond in target uridines. Specifically modifies U16 in tRNAs. This is tRNA-dihydrouridine(16) synthase from Escherichia coli O157:H7.